The following is a 253-amino-acid chain: Triosephosphate isomerase (253 aa).

8–10 (NWK) contacts substrate. His-91 functions as the Electrophile in the catalytic mechanism. Catalysis depends on Glu-168, which acts as the Proton acceptor. Substrate contacts are provided by residues Gly-174, Ser-213, and 234 to 235 (GG).

This sequence belongs to the triosephosphate isomerase family. In terms of assembly, homodimer.

It is found in the cytoplasm. It carries out the reaction D-glyceraldehyde 3-phosphate = dihydroxyacetone phosphate. It participates in carbohydrate biosynthesis; gluconeogenesis. The protein operates within carbohydrate degradation; glycolysis; D-glyceraldehyde 3-phosphate from glycerone phosphate: step 1/1. Its function is as follows. Involved in the gluconeogenesis. Catalyzes stereospecifically the conversion of dihydroxyacetone phosphate (DHAP) to D-glyceraldehyde-3-phosphate (G3P). The sequence is that of Triosephosphate isomerase from Acidiphilium cryptum (strain JF-5).